The sequence spans 284 residues: L-ribulose-5-phosphate 3-epimerase UlaE (284 aa).

The protein belongs to the L-ribulose-5-phosphate 3-epimerase family.

It carries out the reaction L-ribulose 5-phosphate = L-xylulose 5-phosphate. The protein operates within cofactor degradation; L-ascorbate degradation; D-xylulose 5-phosphate from L-ascorbate: step 3/4. Functionally, catalyzes the isomerization of L-xylulose-5-phosphate to L-ribulose-5-phosphate. Is involved in the anaerobic L-ascorbate utilization. The protein is L-ribulose-5-phosphate 3-epimerase UlaE of Shigella boydii serotype 18 (strain CDC 3083-94 / BS512).